We begin with the raw amino-acid sequence, 367 residues long: uncharacterized protein (367 aa).

This is an uncharacterized protein from Buchnera aphidicola subsp. Acyrthosiphon pisum (strain APS) (Acyrthosiphon pisum symbiotic bacterium).